We begin with the raw amino-acid sequence, 212 residues long: Peptide methionine sulfoxide reductase MsrA (212 aa).

The active site involves Cys52.

Belongs to the MsrA Met sulfoxide reductase family.

The enzyme catalyses L-methionyl-[protein] + [thioredoxin]-disulfide + H2O = L-methionyl-(S)-S-oxide-[protein] + [thioredoxin]-dithiol. It carries out the reaction [thioredoxin]-disulfide + L-methionine + H2O = L-methionine (S)-S-oxide + [thioredoxin]-dithiol. Functionally, has an important function as a repair enzyme for proteins that have been inactivated by oxidation. Catalyzes the reversible oxidation-reduction of methionine sulfoxide in proteins to methionine. The chain is Peptide methionine sulfoxide reductase MsrA from Escherichia coli O6:K15:H31 (strain 536 / UPEC).